The following is a 259-amino-acid chain: Archaerhodopsin-2 (259 aa).

A propeptide spanning residues 1-6 is cleaved from the precursor; sequence MDPIAL. Position 7 is a pyrrolidone carboxylic acid (glutamine 7). Residues 7-18 lie on the Extracellular side of the membrane; sequence QAGFDLLNDGRP. Residues 19-40 form a helical membrane-spanning segment; sequence ETLWLGIGTLLMLIGTFYFIAR. Residues 41–49 are Cytoplasmic-facing; sequence GWGVTDKEA. The helical transmembrane segment at 50–71 threads the bilayer; that stretch reads REYYAITILVPGIASAAYLAMF. Over 72–90 the chain is Extracellular; it reads FGIGVTEVELASGTVLDIY. The chain crosses the membrane as a helical span at residues 91–112; that stretch reads YARYADWLFTTPLLLLDLALLA. The Cytoplasmic segment spans residues 113 to 115; sequence KVD. A helical membrane pass occupies residues 116–138; it reads RVTIGTLIGVDALMIVTGLIGAL. Over 139-142 the chain is Extracellular; the sequence is SKTP. The chain crosses the membrane as a helical span at residues 143 to 171; it reads LARYTWWLFSTIAFLFVLYYLLTSLRSAA. Topologically, residues 172–174 are cytoplasmic; the sequence is AKR. The helical transmembrane segment at 175–203 threads the bilayer; it reads SEEVRSTFNTLTALVAVLWTAYPILWIVG. The Extracellular segment spans residues 204-211; the sequence is TEGAGVVG. Residues 212–244 traverse the membrane as a helical segment; the sequence is LGIETLAFMVLDVTAKVGFGFVLLRSRAILGET. At lysine 227 the chain carries N6-(retinylidene)lysine. Residues 245-259 are Cytoplasmic-facing; sequence EAPEPSAGADASAAD.

This sequence belongs to the archaeal/bacterial/fungal opsin family.

It is found in the cell membrane. Its function is as follows. Light-driven proton pump. It may interact with bacterioruberin in the claret membrane. The chain is Archaerhodopsin-2 from Halobacterium sp. (strain aus-2).